The sequence spans 205 residues: Large ribosomal subunit protein uL4 (205 aa).

This sequence belongs to the universal ribosomal protein uL4 family. As to quaternary structure, part of the 50S ribosomal subunit.

One of the primary rRNA binding proteins, this protein initially binds near the 5'-end of the 23S rRNA. It is important during the early stages of 50S assembly. It makes multiple contacts with different domains of the 23S rRNA in the assembled 50S subunit and ribosome. In terms of biological role, forms part of the polypeptide exit tunnel. The protein is Large ribosomal subunit protein uL4 of Thermus thermophilus (strain ATCC BAA-163 / DSM 7039 / HB27).